We begin with the raw amino-acid sequence, 251 residues long: tRNA (guanine-N(7)-)-methyltransferase (251 aa).

S-adenosyl-L-methionine-binding positions include G71, 94-95 (EL), 128-129 (NS), and L148. Residue D151 is part of the active site. 226–228 (TEE) lines the S-adenosyl-L-methionine pocket.

The protein belongs to the class I-like SAM-binding methyltransferase superfamily. TrmB family.

The protein resides in the nucleus. The enzyme catalyses guanosine(46) in tRNA + S-adenosyl-L-methionine = N(7)-methylguanosine(46) in tRNA + S-adenosyl-L-homocysteine. The protein operates within tRNA modification; N(7)-methylguanine-tRNA biosynthesis. Catalyzes the formation of N(7)-methylguanine at position 46 (m7G46) in tRNA. The chain is tRNA (guanine-N(7)-)-methyltransferase from Arabidopsis thaliana (Mouse-ear cress).